Here is a 90-residue protein sequence, read N- to C-terminus: UPF0335 protein bsl7135 (90 aa).

This sequence belongs to the UPF0335 family.

This chain is UPF0335 protein bsl7135, found in Bradyrhizobium diazoefficiens (strain JCM 10833 / BCRC 13528 / IAM 13628 / NBRC 14792 / USDA 110).